The sequence spans 418 residues: Serine proteinase inhibitor 2.4 (418 aa).

The signal sequence occupies residues 1 to 28 (MAFIAALGIFMAGICPAVLCFPNGTLGR). 4 N-linked (GlcNAc...) asparagine glycosylation sites follow: asparagine 23, asparagine 38, asparagine 104, and asparagine 269.

Belongs to the serpin family.

The protein resides in the secreted. The chain is Serine proteinase inhibitor 2.4 from Apodemus sylvaticus (European woodmouse).